We begin with the raw amino-acid sequence, 311 residues long: Malate dehydrogenase (311 aa).

NAD(+) contacts are provided by residues 7–12 (GAGNVG) and D32. R82 and R88 together coordinate substrate. Residues N95 and 118 to 120 (VSN) each bind NAD(+). The substrate site is built by N120 and R151. The active-site Proton acceptor is the H175.

This sequence belongs to the LDH/MDH superfamily. MDH type 3 family.

The enzyme catalyses (S)-malate + NAD(+) = oxaloacetate + NADH + H(+). Catalyzes the reversible oxidation of malate to oxaloacetate. The polypeptide is Malate dehydrogenase (Flavobacterium johnsoniae (strain ATCC 17061 / DSM 2064 / JCM 8514 / BCRC 14874 / CCUG 350202 / NBRC 14942 / NCIMB 11054 / UW101) (Cytophaga johnsonae)).